We begin with the raw amino-acid sequence, 157 residues long: Transcriptional repressor NrdR (157 aa).

Positions 1–21 are disordered; it reads MRCPYCGSEDSQVKDSRPAED. Residues 3 to 34 fold into a zinc finger; sequence CPYCGSEDSQVKDSRPAEDGNAIRRRRICPDC. Basic and acidic residues predominate over residues 11 to 21; it reads SQVKDSRPAED. The region spanning 49-139 is the ATP-cone domain; it reads LMIIKKTGRK…VYRDFSHAED (91 aa).

Belongs to the NrdR family. Zn(2+) serves as cofactor.

Functionally, negatively regulates transcription of bacterial ribonucleotide reductase nrd genes and operons by binding to NrdR-boxes. This Sinorhizobium medicae (strain WSM419) (Ensifer medicae) protein is Transcriptional repressor NrdR.